A 486-amino-acid chain; its full sequence is uncharacterized protein (486 aa).

Belongs to the UbiD family.

This is an uncharacterized protein from Aquifex aeolicus (strain VF5).